The primary structure comprises 328 residues: Biotin synthase (328 aa).

One can recognise a Radical SAM core domain in the interval 48-277; that stretch reads FVGNEVHLCS…GKRITVCGGR (230 aa). The [4Fe-4S] cluster site is built by Cys-66, Cys-70, and Cys-73. Ser-142 and Cys-202 together coordinate [2Fe-2S] cluster.

This sequence belongs to the radical SAM superfamily. Biotin synthase family. As to quaternary structure, homodimer. [4Fe-4S] cluster is required as a cofactor. The cofactor is [2Fe-2S] cluster.

It catalyses the reaction (4R,5S)-dethiobiotin + (sulfur carrier)-SH + 2 reduced [2Fe-2S]-[ferredoxin] + 2 S-adenosyl-L-methionine = (sulfur carrier)-H + biotin + 2 5'-deoxyadenosine + 2 L-methionine + 2 oxidized [2Fe-2S]-[ferredoxin]. It functions in the pathway cofactor biosynthesis; biotin biosynthesis; biotin from 7,8-diaminononanoate: step 2/2. In terms of biological role, catalyzes the conversion of dethiobiotin (DTB) to biotin by the insertion of a sulfur atom into dethiobiotin via a radical-based mechanism. This chain is Biotin synthase, found in Citrifermentans bemidjiense (strain ATCC BAA-1014 / DSM 16622 / JCM 12645 / Bem) (Geobacter bemidjiensis).